A 512-amino-acid chain; its full sequence is Cytochrome P450 71BT1 (512 aa).

An N-terminal signal peptide occupies residues 1 to 24 (MENLFIFLFALLLFCFMLLKLSKK). Residues Asn-111 and Asn-168 are each glycosylated (N-linked (GlcNAc...) asparagine). Heme is bound at residue Cys-447.

The protein belongs to the cytochrome P450 family.

The polypeptide is Cytochrome P450 71BT1 (Catharanthus roseus (Madagascar periwinkle)).